Here is a 605-residue protein sequence, read N- to C-terminus: Aspartate--tRNA(Asp/Asn) ligase (605 aa).

E176 is a binding site for L-aspartate. The aspartate stretch occupies residues 200–203 (QQFK). Residues R222 and H452 each contribute to the L-aspartate site. Position 222 to 224 (222 to 224 (RDE)) interacts with ATP. E490 serves as a coordination point for ATP. R497 contacts L-aspartate. 542 to 545 (GIDR) is a binding site for ATP.

Belongs to the class-II aminoacyl-tRNA synthetase family. Type 1 subfamily. As to quaternary structure, homodimer.

The protein resides in the cytoplasm. It catalyses the reaction tRNA(Asx) + L-aspartate + ATP = L-aspartyl-tRNA(Asx) + AMP + diphosphate. Functionally, aspartyl-tRNA synthetase with relaxed tRNA specificity since it is able to aspartylate not only its cognate tRNA(Asp) but also tRNA(Asn). Reaction proceeds in two steps: L-aspartate is first activated by ATP to form Asp-AMP and then transferred to the acceptor end of tRNA(Asp/Asn). The sequence is that of Aspartate--tRNA(Asp/Asn) ligase from Rickettsia prowazekii (strain Madrid E).